The chain runs to 90 residues: Cell division topological specificity factor (90 aa).

It belongs to the MinE family.

In terms of biological role, prevents the cell division inhibition by proteins MinC and MinD at internal division sites while permitting inhibition at polar sites. This ensures cell division at the proper site by restricting the formation of a division septum at the midpoint of the long axis of the cell. This chain is Cell division topological specificity factor, found in Pelotomaculum thermopropionicum (strain DSM 13744 / JCM 10971 / SI).